Reading from the N-terminus, the 235-residue chain is N,O-diacetylmuramidase (235 aa).

The first 17 residues, 1 to 17 (MKLSLLTVAAAAGAAVA), serve as a signal peptide directing secretion. Positions 29–235 (SVQGFDISGY…DQLQRFAKGG (207 aa)) constitute a Ch-type lysozyme domain. Residues Asp-34, Asp-122, and Glu-124 contribute to the active site. A disulfide bridge links Cys-132 with Cys-171.

This sequence belongs to the glycosyl hydrolase 25 family.

The protein localises to the secreted. The catalysed reaction is Hydrolysis of (1-&gt;4)-beta-linkages between N-acetylmuramic acid and N-acetyl-D-glucosamine residues in a peptidoglycan and between N-acetyl-D-glucosamine residues in chitodextrins.. In terms of biological role, this enzyme has both lysozyme (acetylmuramidase) and diacetylmuramidase activities. This Arthroderma benhamiae (strain ATCC MYA-4681 / CBS 112371) (Trichophyton mentagrophytes) protein is N,O-diacetylmuramidase.